We begin with the raw amino-acid sequence, 442 residues long: Glutamyl-tRNA(Gln) amidotransferase subunit A (442 aa).

Catalysis depends on charge relay system residues K50 and S125. The active-site Acyl-ester intermediate is S149.

It belongs to the amidase family. GatA subfamily. As to quaternary structure, heterotrimer of A, B and C subunits.

The enzyme catalyses L-glutamyl-tRNA(Gln) + L-glutamine + ATP + H2O = L-glutaminyl-tRNA(Gln) + L-glutamate + ADP + phosphate + H(+). Allows the formation of correctly charged Gln-tRNA(Gln) through the transamidation of misacylated Glu-tRNA(Gln) in organisms which lack glutaminyl-tRNA synthetase. The reaction takes place in the presence of glutamine and ATP through an activated gamma-phospho-Glu-tRNA(Gln). The protein is Glutamyl-tRNA(Gln) amidotransferase subunit A of Nitratiruptor sp. (strain SB155-2).